We begin with the raw amino-acid sequence, 740 residues long: Alpha-1,6-mannosylglycoprotein 6-beta-N-acetylglucosaminyltransferase A (740 aa).

At 1 to 13 the chain is on the cytoplasmic side; the sequence is MAFFTPWKLSSQK. A helical; Signal-anchor for type II membrane protein transmembrane segment spans residues 14–30; that stretch reads LGFFLVTFGFIWGMMLL. Residues 31–740 are Lumenal-facing; that stretch reads HFTIQQRTQP…GQVALCKDCL (710 aa). 3 N-linked (GlcNAc...) asparagine glycosylation sites follow: Asn109, Asn114, and Asn117. 9 disulfide bridges follow: Cys144–Cys182, Cys155–Cys195, Cys171–Cys337, Cys371–Cys625, Cys648–Cys723, Cys652–Cys725, Cys659–Cys712, Cys680–Cys701, and Cys736–Cys739. The sufficient for catalytic activity stretch occupies residues 212-740; that stretch reads NSLAEIRTDF…GQVALCKDCL (529 aa). A glycan (N-linked (GlcNAc...) asparagine) is linked at Asn333. 377-378 contributes to the substrate binding site; the sequence is DS. Residues Asn432 and Asn446 are each glycosylated (N-linked (GlcNAc...) asparagine). Residue Glu525 participates in UDP-N-acetyl-alpha-D-glucosamine binding. Lys553 serves as a coordination point for substrate.

Belongs to the glycosyltransferase 18 family. N-glycosylated. Post-translationally, a secreted form is released from the membrane after cleavage by gamma-secretase.

It localises to the golgi apparatus membrane. The protein resides in the secreted. The enzyme catalyses N(4)-{beta-D-GlcNAc-(1-&gt;2)-[beta-D-GlcNAc-(1-&gt;4)]-alpha-D-Man-(1-&gt;3)-[beta-D-GlcNAc-(1-&gt;2)-alpha-D-Man-(1-&gt;6)]-beta-D-Man-(1-&gt;4)-beta-D-GlcNAc-(1-&gt;4)-beta-D-GlcNAc}-L-asparaginyl-[protein] + UDP-N-acetyl-alpha-D-glucosamine = N(4)-{beta-D-GlcNAc-(1-&gt;2)-[beta-D-GlcNAc-(1-&gt;4)]-alpha-D-Man-(1-&gt;3)-[beta-D-GlcNAc-(1-&gt;2)-[beta-D-GlcNAc-(1-&gt;6)]-alpha-D-Man-(1-&gt;6)]-beta-D-Man-(1-&gt;4)-beta-D-GlcNAc-(1-&gt;4)-beta-D-GlcNAc}-L-asparaginyl-[protein] + UDP + H(+). It participates in protein modification; protein glycosylation. Functionally, catalyzes the addition of N-acetylglucosamine (GlcNAc) in beta 1-6 linkage to the alpha-linked mannose of biantennary N-linked oligosaccharides. Catalyzes an important step in the biosynthesis of branched, complex-type N-glycans, such as those found on EGFR, TGFR (TGF-beta receptor) and CDH2. Via its role in the biosynthesis of complex N-glycans, plays an important role in the activation of cellular signaling pathways, reorganization of the actin cytoskeleton, cell-cell adhesion and cell migration. MGAT5-dependent EGFR N-glycosylation enhances the interaction between EGFR and LGALS3 and thereby prevents rapid EGFR endocytosis and prolongs EGFR signaling. Required for efficient interaction between TGFB1 and its receptor. Enhances activation of intracellular signaling pathways by several types of growth factors, including FGF2, PDGF, IGF, TGFB1 and EGF. MGAT5-dependent CDH2 N-glycosylation inhibits CDH2-mediated homotypic cell-cell adhesion and contributes to the regulation of downstream signaling pathways. Promotes cell migration. Contributes to the regulation of the inflammatory response. MGAT5-dependent TCR N-glycosylation enhances the interaction between TCR and LGALS3, limits agonist-induced TCR clustering, and thereby dampens TCR-mediated responses to antigens. Required for normal leukocyte evasation and accumulation at sites of inflammation. Inhibits attachment of monocytes to the vascular endothelium and subsequent monocyte diapedesis. In terms of biological role, promotes proliferation of umbilical vein endothelial cells and angiogenesis, at least in part by promoting the release of the growth factor FGF2 from the extracellular matrix. The sequence is that of Alpha-1,6-mannosylglycoprotein 6-beta-N-acetylglucosaminyltransferase A (MGAT5) from Cricetulus griseus (Chinese hamster).